Reading from the N-terminus, the 1035-residue chain is Kinesin-like protein KIN-4A (1035 aa).

In terms of domain architecture, Kinesin motor spans 10 to 369; the sequence is CVKVAVHVRP…LKYANRARNI (360 aa). 89 to 96 contacts ATP; the sequence is GQTGSGKT. Coiled coils occupy residues 380–437 and 498–702; these read VADE…LRNH and MLQD…RKSS. 3 disordered regions span residues 697–720, 766–787, and 882–928; these read EARKSSGRDNSGMNGTSPGSHMTE, VMSGAASPPRGKNGNSRANTLS, and HSES…PLSP. Composition is skewed to polar residues over residues 704–716 and 778–787; these read RDNSGMNGTSPGS and NGNSRANTLS. Residues 850 to 904 adopt a coiled-coil conformation; that stretch reads NVAADARCQVREKEMEIKEMKEQMTELVTILRHSESRRRETEKQLKQREQAAVTA. Over residues 882–898 the composition is skewed to basic and acidic residues; that stretch reads HSESRRRETEKQLKQRE. Residues 902–926 show a composition bias toward polar residues; that stretch reads VTATTSPGNGNGSVKHSADDSNTPL. A Nuclear localization signal motif is present at residues 971–987; sequence KKVSIAGQSGKLWRWKR. Positions 1014 to 1035 are disordered; that stretch reads DETMTRTRPRPQLLPHRPQRVM.

It belongs to the TRAFAC class myosin-kinesin ATPase superfamily. Kinesin family. KIN-4 subfamily. In terms of assembly, homodimer. As to expression, expressed in young tissues with cell divisions, including initiating adventitious roots, primary root tips, flower primordia, intercalary meristems, sub-epidermal regions of young culms and panicles.

Its subcellular location is the nucleus. The protein localises to the cytoplasm. It localises to the cytoskeleton. With respect to regulation, may be regulated by cyclin-dependent kinase A. Its function is as follows. Microtubule-dependent motor protein involved in the control of the oriented deposition of cellulose microfibrils. Involved in wall biogenesis and modification, and contributes to cell-cycle progression and cell division. Acts as a transcriptional activator in gibberellic acid (GA) biosynthesis pathway. Binds specifically to the DNA sequence 5'-ACCAACTTGAA-3' of the ent-kaurene oxidase 2 (CYP701A6 or OsKO2) promoter. May regulate CYP701A6 gene expression and mediates cell elongation by regulating the GA biosynthesis pathway. The sequence is that of Kinesin-like protein KIN-4A from Oryza sativa subsp. japonica (Rice).